The following is a 627-amino-acid chain: MPKTLHEIPRERPATPLLDRASSPAELRRLGEADLETLADELRQYLLYTVGQTGGHFGAGLGVVELTIALHYVFDTPDDRLVWDVGHQAYPHKILTERRELMGTLRQKNGLAAFPRRAESEYDTFGVGHSSTSISAALGMAIAARLQGKERKSVAVIGDGALTAGMAFEALNHASEVDADMLVILNDNDMSISHNVGGLSNYLAKILSSRTYSSMREGSKKVLSRLPGAWEIARRTEEYAKGMLVPGTLFEELGWNYIGPIDGHDLPTLVATLRNMRDMKGPQFLHVVTKKGKGFAPAELDPIGYHAITKLEAPGSAPKKTGGPKYSSVFGQWLCDMAAQDARLLGITPAMKEGSDLVAFSERYPERYFDVAIAEQHAVTLAAGMACEGMKPVVAIYSTFLQRAYDQLIHDVAVQHLDVLFAIDRAGLVGEDGPTHAGSFDISYLRCIPGMLVMTPSDEDELRKLLTTGYLFDGPAAVRYPRGSGPNHPIDPDLQPVEIGKGVVRRRGGRVALLVFGVQLAEAMKVAESLDATVVDMRFVKPLDEALVRELAGSHELLVTIEENAVMGGAGSAVGEFLASEGLEVPLLQLGLPDYYVEHAKPSEMLAECGLDAAGIEKAVRQRLDRQ.

Residues histidine 87 and 128–130 (GHS) each bind thiamine diphosphate. Mg(2+) is bound at residue aspartate 159. Thiamine diphosphate is bound by residues 160–161 (GA), asparagine 188, phenylalanine 295, and glutamate 375. Residue asparagine 188 participates in Mg(2+) binding.

The protein belongs to the transketolase family. DXPS subfamily. As to quaternary structure, homodimer. The cofactor is Mg(2+). Thiamine diphosphate is required as a cofactor.

The catalysed reaction is D-glyceraldehyde 3-phosphate + pyruvate + H(+) = 1-deoxy-D-xylulose 5-phosphate + CO2. Its pathway is metabolic intermediate biosynthesis; 1-deoxy-D-xylulose 5-phosphate biosynthesis; 1-deoxy-D-xylulose 5-phosphate from D-glyceraldehyde 3-phosphate and pyruvate: step 1/1. Its function is as follows. Catalyzes the acyloin condensation reaction between C atoms 2 and 3 of pyruvate and glyceraldehyde 3-phosphate to yield 1-deoxy-D-xylulose-5-phosphate (DXP). This Pseudomonas aeruginosa (strain LESB58) protein is 1-deoxy-D-xylulose-5-phosphate synthase.